A 548-amino-acid polypeptide reads, in one-letter code: Alpha-1,3-mannosyl-glycoprotein 4-beta-N-acetylglucosaminyltransferase B (548 aa).

Residues 1–7 (MRLRNGT) are Cytoplasmic-facing. Residues 8–28 (FLTLLLFCLCAFLSLSWYAAL) traverse the membrane as a helical; Signal-anchor for type II membrane protein segment. At 29 to 548 (SGQKGDVVDV…LSEIFLKKAD (520 aa)) the chain is on the lumenal side. The stretch at 36–83 (VDVYQREFLALRDRLHAAEQESLKRSKELNLVLDEIKRAVSERQALRD) forms a coiled coil. N-linked (GlcNAc...) asparagine glycans are attached at residues N87 and N103.

Belongs to the glycosyltransferase 54 family. Interacts with SLC35A3. A divalent metal cation serves as cofactor. N-glycosylated. Widely expressed. Strongly overexpressed in pancreatic cancer.

It localises to the golgi apparatus membrane. It catalyses the reaction an N(4)-{beta-D-GlcNAc-(1-&gt;2)-alpha-D-Man-(1-&gt;3)-[alpha-D-Man-(1-&gt;6)]-beta-D-Man-(1-&gt;4)-beta-D-GlcNAc-(1-&gt;4)-beta-D-GlcNAc}-L-asparaginyl-[protein] + UDP-N-acetyl-alpha-D-glucosamine = an N(4)-{beta-D-GlcNAc-(1-&gt;2)-[beta-D-GlcNAc-(1-&gt;4)]-alpha-D-Man-(1-&gt;3)-[alpha-D-Man-(1-&gt;6)]-beta-D-Man-(1-&gt;4)-beta-D-GlcNAc-(1-&gt;4)-beta-D-GlcNAc}-L-asparaginyl-[protein] + UDP + H(+). The catalysed reaction is N(4)-{beta-D-GlcNAc-(1-&gt;2)-alpha-D-Man-(1-&gt;3)-[beta-D-GlcNAc-(1-&gt;2)-alpha-D-Man-(1-&gt;6)]-beta-D-Man-(1-&gt;4)-beta-D-GlcNAc-(1-&gt;4)-beta-D-GlcNAc}-L-asparaginyl-[protein] + UDP-N-acetyl-alpha-D-glucosamine = N(4)-{beta-D-GlcNAc-(1-&gt;2)-[beta-D-GlcNAc-(1-&gt;4)]-alpha-D-Man-(1-&gt;3)-[beta-D-GlcNAc-(1-&gt;2)-alpha-D-Man-(1-&gt;6)]-beta-D-Man-(1-&gt;4)-beta-D-GlcNAc-(1-&gt;4)-beta-D-GlcNAc}-L-asparaginyl-[protein] + UDP + H(+). It carries out the reaction an N(4)-{beta-D-GlcNAc-(1-&gt;2)-alpha-D-Man-(1-&gt;3)-[beta-D-GlcNAc-(1-&gt;2)-[beta-D-GlcNAc-(1-&gt;6)]-alpha-D-Man-(1-&gt;6)]-beta-D-Man-(1-&gt;4)-beta-D-GlcNAc-(1-&gt;4)-beta-D-GlcNAc}-L-asparaginyl-[protein] + UDP-N-acetyl-alpha-D-glucosamine = an N(4)-{beta-D-GlcNAc-(1-&gt;2)-[beta-D-GlcNAc-(1-&gt;4)]-alpha-D-Man-(1-&gt;3)-[beta-D-GlcNAc-(1-&gt;2)-[beta-D-GlcNAc-(1-&gt;6)]-alpha-D-Man-(1-&gt;6)]-beta-D-Man-(1-&gt;4)-beta-D-GlcNAc-(1-&gt;4)-beta-D-GlcNAc}-L-asparaginyl-[protein] + UDP + H(+). The enzyme catalyses an N(4)-{beta-D-GlcNAc-(1-&gt;2)-alpha-D-Man-(1-&gt;3)-[beta-D-GlcNAc-(1-&gt;2)-alpha-D-Man-(1-&gt;6)]-beta-D-Man-(1-&gt;4)-beta-D-GlcNAc-(1-&gt;4)-[alpha-L-Fuc-(1-&gt;6)]-beta-D-GlcNAc}-L-asparaginyl-[protein] + UDP-N-acetyl-alpha-D-glucosamine = N(4)-{beta-D-GlcNAc-(1-&gt;2)-[beta-D-GlcNAc-(1-&gt;4)]-alpha-D-Man-(1-&gt;3)-[beta-D-GlcNAc-(1-&gt;2)-alpha-D-Man-(1-&gt;6)]-beta-D-Man-(1-&gt;4)-beta-D-GlcNAc-(1-&gt;4)-[alpha-L-Fuc-(1-&gt;6)]-beta-D-GlcNAc}-asparaginyl-[protein] + UDP + H(+). It catalyses the reaction an N(4)-{beta-D-GlcNAc-(1-&gt;2)-alpha-D-Man-(1-&gt;3)-[beta-D-Gal-(1-&gt;4)-beta-D-GlcNAc-(1-&gt;2)-alpha-D-Man-(1-&gt;6)]-beta-D-Man-(1-&gt;4)-beta-D-GlcNAc-(1-&gt;4)-beta-D-GlcNAc}-L-asparaginyl-[protein] + UDP-N-acetyl-alpha-D-glucosamine = an N(4)-{beta-D-GlcNAc-(1-&gt;2)-[beta-D-GlcNAc-(1-&gt;4)]-alpha-D-Man-(1-&gt;3)-[beta-D-Gal-(1-&gt;4)-beta-D-GlcNAc-(1-&gt;2)-alpha-D-Man-(1-&gt;6)]-beta-D-Man-(1-&gt;4)-beta-D-GlcNAc-(1-&gt;4)-beta-D-GlcNAc}-L-asparaginyl-[protein] + UDP + H(+). The catalysed reaction is N(4)-{beta-D-GlcNAc-(1-&gt;2)-alpha-D-Man-(1-&gt;3)-[alpha-D-Man-(1-&gt;3)-{alpha-D-Man-(1-&gt;6)}-alpha-D-Man-(1-&gt;6)]-beta-D-Man-(1-&gt;4)-beta-D-GlcNAc-(1-&gt;4)-beta-D-GlcNAc}-asparaginyl-[protein] + UDP-N-acetyl-alpha-D-glucosamine = N(4)-{beta-D-GlcNAc-(1-&gt;2)-[beta-D-GlcNAc-(1-&gt;4)]-alpha-D-Man-(1-&gt;3)-[alpha-D-Man-(1-&gt;3)-{alpha-D-Man-(1-&gt;6)}-alpha-D-Man-(1-&gt;6)]-beta-D-Man-(1-&gt;4)-beta-D-GlcNAc-(1-&gt;4)-beta-D-GlcNAc}-asparaginyl-[protein] + UDP + H(+). It carries out the reaction N(4)-{beta-D-GlcNAc-(1-&gt;2)-alpha-D-Man-(1-&gt;3)-beta-D-Man-(1-&gt;4)-beta-D-GlcNAc-(1-&gt;4)-beta-D-GlcNAc}-asparaginyl-[protein] + UDP-N-acetyl-alpha-D-glucosamine = N(4)-{beta-D-GlcNAc-(1-&gt;2)-[beta-D-GlcNAc-(1-&gt;4)]-alpha-D-Man-(1-&gt;3)-beta-D-Man-(1-&gt;4)-beta-D-GlcNAc-(1-&gt;4)-beta-D-GlcNAc}-asparaginyl-[protein] + UDP + H(+). Its pathway is protein modification; protein glycosylation. Its function is as follows. Glycosyltransferase that catalyzes the transfer of GlcNAc from UDP-GlcNAc to the GlcNAcbeta1-2Manalpha1-3 arm of the core structure of N-linked glycans through a beta1-4 linkage and participates in the production of tri- and tetra-antennary N-linked sugar chains. Prefers complex-type N-glycans over hybrid-types. Has lower affinities for donors or acceptors than MGAT4A, suggesting that, under physiological conditions, it is not the main contributor in N-glycan biosynthesis. This chain is Alpha-1,3-mannosyl-glycoprotein 4-beta-N-acetylglucosaminyltransferase B, found in Homo sapiens (Human).